A 240-amino-acid polypeptide reads, in one-letter code: Aspartate/glutamate leucyltransferase (240 aa).

This sequence belongs to the R-transferase family. Bpt subfamily.

Its subcellular location is the cytoplasm. It catalyses the reaction N-terminal L-glutamyl-[protein] + L-leucyl-tRNA(Leu) = N-terminal L-leucyl-L-glutamyl-[protein] + tRNA(Leu) + H(+). The catalysed reaction is N-terminal L-aspartyl-[protein] + L-leucyl-tRNA(Leu) = N-terminal L-leucyl-L-aspartyl-[protein] + tRNA(Leu) + H(+). Functions in the N-end rule pathway of protein degradation where it conjugates Leu from its aminoacyl-tRNA to the N-termini of proteins containing an N-terminal aspartate or glutamate. The sequence is that of Aspartate/glutamate leucyltransferase from Bordetella avium (strain 197N).